The following is a 92-amino-acid chain: Transcription factor ILI6 (92 aa).

The segment at 1 to 20 (MSSRRSRSRQSGSSRITDEQ) is disordered. One can recognise a bHLH domain in the interval 5 to 59 (RSRSRQSGSSRITDEQISDLVSKLQDLLPEARLRSNDRVPSSRVLQETCNYIRSL).

This sequence belongs to the bHLH protein family. As to quaternary structure, interacts with APG.

The protein localises to the nucleus. Atypical and probable non DNA-binding bHLH transcription factor that acts as a positive regulator of grain size. Binds the transcription repressor APG and forms a heterodimer of antagonistic bHLH transcription factors that regulates grain length and weight by controlling cell elongation in lemma and palea. May be involved in the control of lamina inclination through brassinosteroid signaling pathway. The polypeptide is Transcription factor ILI6 (ILI6) (Oryza sativa subsp. indica (Rice)).